We begin with the raw amino-acid sequence, 196 residues long: MSGIKSDTEHNNNNIEEEVRTLFVSGLPIDIKPRELYLLFRPFKGYEGSLIKLTSKQPVGFVTFDNRAGAEAAKNALNGIRFDPENPQTLRLEFAKANTKMAKNKLMATPNPTNFHPALGAHFIARDPYDFTGAALIPASPEAWAPYPLYTAELAPAIPHAAFTYPAAAAAALHAQMRWYPPSEATQQGWKSRQFC.

The region spanning arginine 20 to alanine 97 is the RRM domain. The interval aspartate 30–phenylalanine 40 is important for homodimerization.

As to quaternary structure, homodimer. Expressed in developing heart, pronephros, retina and epiphysis. In adult, high expression in heart, moderate in kidney, undetectable in liver, lung and skeletal muscle.

Its subcellular location is the cytoplasm. The protein resides in the nucleus. It is found in the stress granule. RNA-binding protein involved in the regulation of smooth muscle cell differentiation and proliferation in the gastrointestinal system. Binds NOG mRNA, the major inhibitor of the bone morphogenetic protein (BMP) pathway. Mediates an increase of NOG mRNA levels, thereby contributing to the negative regulation of BMP signaling pathway and promoting reversible dedifferentiation and proliferation of smooth muscle cells. Acts as a pre-mRNA alternative splicing regulator. Mediates ACTN1 and FLNB alternative splicing. Likely binds to mRNA tandem CAC trinucleotide or CA dinucleotide motifs. This chain is RNA-binding protein with multiple splicing 2, found in Xenopus laevis (African clawed frog).